The sequence spans 383 residues: Na(+)/H(+) antiporter NhaA (383 aa).

A run of 11 helical transmembrane segments spans residues 14–34, 47–67, 87–107, 117–137, 146–166, 171–191, 205–225, 252–272, 280–300, 321–341, and 356–376; these read AGGI…NSPL, FGMS…FLLI, IFPA…YVAF, GWAI…ALLG, VFLL…IALF, LSTM…MLNA, AILW…GVVI, VAFG…LEGV, MLPL…IFTF, IFAV…ISSL, and LGIL…LHFS.

This sequence belongs to the NhaA Na(+)/H(+) (TC 2.A.33) antiporter family.

Its subcellular location is the cell inner membrane. It carries out the reaction Na(+)(in) + 2 H(+)(out) = Na(+)(out) + 2 H(+)(in). Na(+)/H(+) antiporter that extrudes sodium in exchange for external protons. The sequence is that of Na(+)/H(+) antiporter NhaA from Vibrio alginolyticus.